A 227-amino-acid polypeptide reads, in one-letter code: Probable 2-phosphosulfolactate phosphatase (227 aa).

This sequence belongs to the ComB family. It depends on Mg(2+) as a cofactor.

It catalyses the reaction (2R)-O-phospho-3-sulfolactate + H2O = (2R)-3-sulfolactate + phosphate. This chain is Probable 2-phosphosulfolactate phosphatase, found in Thermotoga petrophila (strain ATCC BAA-488 / DSM 13995 / JCM 10881 / RKU-1).